A 98-amino-acid polypeptide reads, in one-letter code: uncharacterized protein (98 aa).

This is an uncharacterized protein from Invertebrate iridescent virus 6 (IIV-6).